A 917-amino-acid chain; its full sequence is Translation initiation factor IF-2 (917 aa).

Disordered regions lie at residues 1-84 (MSDG…GRAG) and 150-318 (KESE…DRER). Residues 10 to 27 (DGNNTPSQGGEQTRSSRL) are compositionally biased toward polar residues. Low complexity-rich tracts occupy residues 69-84 (AAGPGAGAAARGGRAG), 154-177 (QQAAREQAAAEAAARAAEQAAAEA), and 227-236 (SRPAAAAPAR). Positions 265 to 274 (GAPPAPPRRP) are enriched in pro residues. Residues 282–305 (GGSDRRSGRIDVRAAIEGDDDKTR) show a composition bias toward basic and acidic residues. One can recognise a tr-type G domain in the interval 416–586 (PRAPVVTVMG…LLQSEMLDLK (171 aa)). The G1 stretch occupies residues 425–432 (GHVDHGKT). 425-432 (GHVDHGKT) serves as a coordination point for GTP. The tract at residues 450 to 454 (GITQH) is G2. Positions 472-475 (DTPG) are G3. GTP is bound by residues 472 to 476 (DTPGH) and 526 to 529 (NKID). The segment at 526 to 529 (NKID) is G4. Positions 562–564 (SAL) are G5.

This sequence belongs to the TRAFAC class translation factor GTPase superfamily. Classic translation factor GTPase family. IF-2 subfamily.

Its subcellular location is the cytoplasm. One of the essential components for the initiation of protein synthesis. Protects formylmethionyl-tRNA from spontaneous hydrolysis and promotes its binding to the 30S ribosomal subunits. Also involved in the hydrolysis of GTP during the formation of the 70S ribosomal complex. In Gluconobacter oxydans (strain 621H) (Gluconobacter suboxydans), this protein is Translation initiation factor IF-2.